Consider the following 341-residue polypeptide: S-adenosylmethionine:tRNA ribosyltransferase-isomerase (341 aa).

This sequence belongs to the QueA family. Monomer.

The protein localises to the cytoplasm. It carries out the reaction 7-aminomethyl-7-carbaguanosine(34) in tRNA + S-adenosyl-L-methionine = epoxyqueuosine(34) in tRNA + adenine + L-methionine + 2 H(+). The protein operates within tRNA modification; tRNA-queuosine biosynthesis. Functionally, transfers and isomerizes the ribose moiety from AdoMet to the 7-aminomethyl group of 7-deazaguanine (preQ1-tRNA) to give epoxyqueuosine (oQ-tRNA). This is S-adenosylmethionine:tRNA ribosyltransferase-isomerase from Chlorobium chlorochromatii (strain CaD3).